We begin with the raw amino-acid sequence, 565 residues long: Estrogen receptor gamma (565 aa).

The interval Met-1 to Tyr-168 is modulating. NR C4-type zinc fingers lie at residues Cys-169–Cys-189 and Cys-205–Cys-229. Residues Cys-169–Met-234 constitute a DNA-binding region (nuclear receptor). Positions Thr-235–Leu-285 are hinge. An NR LBD domain is found at Thr-286–His-516. Residues Arg-522–Gln-565 are disordered.

It belongs to the nuclear hormone receptor family. NR3 subfamily. Homodimer. In terms of tissue distribution, abundant in the ovary and testes, barely detectable in the brain and muscle and undetectable in the liver.

Its subcellular location is the nucleus. The steroid hormones and their receptors are involved in the regulation of eukaryotic gene expression and affect cellular proliferation and differentiation in target tissues. The chain is Estrogen receptor gamma (esr3) from Micropogonias undulatus (Atlantic croaker).